An 88-amino-acid chain; its full sequence is Phosphocarrier protein HPr (88 aa).

Residues methionine 1 to isoleucine 88 form the HPr domain. Histidine 15 (pros-phosphohistidine intermediate) is an active-site residue. Serine 47 carries the phosphoserine; by HPrK/P modification.

It belongs to the HPr family.

The protein localises to the cytoplasm. Its activity is regulated as follows. Phosphorylation on Ser-47 inhibits the phosphoryl transfer from enzyme I to HPr. Its function is as follows. General (non sugar-specific) component of the phosphoenolpyruvate-dependent sugar phosphotransferase system (sugar PTS). This major carbohydrate active-transport system catalyzes the phosphorylation of incoming sugar substrates concomitantly with their translocation across the cell membrane. The phosphoryl group from phosphoenolpyruvate (PEP) is transferred to the phosphoryl carrier protein HPr by enzyme I. Phospho-HPr then transfers it to the PTS EIIA domain. In terms of biological role, P-Ser-HPr interacts with the catabolite control protein A (CcpA), forming a complex that binds to DNA at the catabolite response elements cre, operator sites preceding a large number of catabolite-regulated genes. Thus, P-Ser-HPr is a corepressor in carbon catabolite repression (CCR), a mechanism that allows bacteria to coordinate and optimize the utilization of available carbon sources. P-Ser-HPr also plays a role in inducer exclusion, in which it probably interacts with several non-PTS permeases and inhibits their transport activity. The sequence is that of Phosphocarrier protein HPr (ptsH) from Mycoplasma genitalium (strain ATCC 33530 / DSM 19775 / NCTC 10195 / G37) (Mycoplasmoides genitalium).